The chain runs to 141 residues: Nucleoside diphosphate kinase (141 aa).

Lys-11, Phe-59, Arg-87, Thr-93, Arg-104, and Asn-114 together coordinate ATP. The Pros-phosphohistidine intermediate role is filled by His-117.

Belongs to the NDK family. In terms of assembly, homotetramer. Mg(2+) serves as cofactor.

Its subcellular location is the cytoplasm. The enzyme catalyses a 2'-deoxyribonucleoside 5'-diphosphate + ATP = a 2'-deoxyribonucleoside 5'-triphosphate + ADP. The catalysed reaction is a ribonucleoside 5'-diphosphate + ATP = a ribonucleoside 5'-triphosphate + ADP. Functionally, major role in the synthesis of nucleoside triphosphates other than ATP. The ATP gamma phosphate is transferred to the NDP beta phosphate via a ping-pong mechanism, using a phosphorylated active-site intermediate. This is Nucleoside diphosphate kinase from Legionella pneumophila subsp. pneumophila (strain Philadelphia 1 / ATCC 33152 / DSM 7513).